A 174-amino-acid chain; its full sequence is Adenylate kinase (174 aa).

The interval 12 to 41 (STGDMLRAAIKAGTPLGLEAKKIIDEGGLV) is NMP. AMP-binding positions include Thr13, Arg18, 39–41 (GLV), 67–70 (GFPR), and Gln74. Residues 104–141 (GRRVHLASGRTYHVTYNPPKVEGKDDVTGEDLIQRDDD) form an LID region. Residues Arg105 and 114–115 (TY) each bind ATP. AMP is bound by residues Arg138 and Arg149.

It belongs to the adenylate kinase family. As to quaternary structure, monomer.

The protein resides in the cytoplasm. It catalyses the reaction AMP + ATP = 2 ADP. It participates in purine metabolism; AMP biosynthesis via salvage pathway; AMP from ADP: step 1/1. In terms of biological role, catalyzes the reversible transfer of the terminal phosphate group between ATP and AMP. Plays an important role in cellular energy homeostasis and in adenine nucleotide metabolism. This chain is Adenylate kinase, found in Neisseria lactamica.